We begin with the raw amino-acid sequence, 274 residues long: ATP synthase subunit delta (274 aa).

The protein belongs to the ATPase delta chain family. In terms of assembly, F-type ATPases have 2 components, F(1) - the catalytic core - and F(0) - the membrane proton channel. F(1) has five subunits: alpha(3), beta(3), gamma(1), delta(1), epsilon(1). F(0) has three main subunits: a(1), b(2) and c(10-14). The alpha and beta chains form an alternating ring which encloses part of the gamma chain. F(1) is attached to F(0) by a central stalk formed by the gamma and epsilon chains, while a peripheral stalk is formed by the delta and b chains.

Its subcellular location is the cell membrane. Functionally, f(1)F(0) ATP synthase produces ATP from ADP in the presence of a proton or sodium gradient. F-type ATPases consist of two structural domains, F(1) containing the extramembraneous catalytic core and F(0) containing the membrane proton channel, linked together by a central stalk and a peripheral stalk. During catalysis, ATP synthesis in the catalytic domain of F(1) is coupled via a rotary mechanism of the central stalk subunits to proton translocation. In terms of biological role, this protein is part of the stalk that links CF(0) to CF(1). It either transmits conformational changes from CF(0) to CF(1) or is implicated in proton conduction. The protein is ATP synthase subunit delta of Salinispora tropica (strain ATCC BAA-916 / DSM 44818 / JCM 13857 / NBRC 105044 / CNB-440).